The chain runs to 283 residues: Shikimate dehydrogenase (NADP(+)) (283 aa).

Residues 19–21 (SRS) and T66 contribute to the shikimate site. K70 (proton acceptor) is an active-site residue. NADP(+) is bound at residue E82. Residues N91 and D107 each contribute to the shikimate site. NADP(+)-binding positions include 133 to 137 (GAGGA) and I226. Residue Y228 participates in shikimate binding. Residue G249 coordinates NADP(+).

Belongs to the shikimate dehydrogenase family. As to quaternary structure, homodimer.

The enzyme catalyses shikimate + NADP(+) = 3-dehydroshikimate + NADPH + H(+). It functions in the pathway metabolic intermediate biosynthesis; chorismate biosynthesis; chorismate from D-erythrose 4-phosphate and phosphoenolpyruvate: step 4/7. Its function is as follows. Involved in the biosynthesis of the chorismate, which leads to the biosynthesis of aromatic amino acids. Catalyzes the reversible NADPH linked reduction of 3-dehydroshikimate (DHSA) to yield shikimate (SA). This chain is Shikimate dehydrogenase (NADP(+)), found in Rhodospirillum rubrum (strain ATCC 11170 / ATH 1.1.1 / DSM 467 / LMG 4362 / NCIMB 8255 / S1).